The primary structure comprises 211 residues: Redox-sensing transcriptional repressor Rex (211 aa).

Residues 17 to 56 (KYHRYLEELLRNEVDRISSKELSKKIGFTASQIRQDFNCF) constitute a DNA-binding region (H-T-H motif). 91-96 (GGGNIG) contacts NAD(+).

Belongs to the transcriptional regulatory Rex family. As to quaternary structure, homodimer.

The protein localises to the cytoplasm. In terms of biological role, modulates transcription in response to changes in cellular NADH/NAD(+) redox state. This is Redox-sensing transcriptional repressor Rex from Clostridium tetani (strain Massachusetts / E88).